We begin with the raw amino-acid sequence, 225 residues long: Ribonuclease T (225 aa).

The interval 1-21 (MSEDHFDEEHEGHGGGGGSRH) is disordered. Positions 33-207 (VVVDVETGGF…YDTEKTAELF (175 aa)) constitute an Exonuclease domain. Positions 36, 38, 194, and 199 each coordinate Mg(2+). H194 acts as the Proton donor/acceptor in catalysis.

This sequence belongs to the RNase T family. In terms of assembly, homodimer. Requires Mg(2+) as cofactor.

Trims short 3' overhangs of a variety of RNA species, leaving a one or two nucleotide 3' overhang. Responsible for the end-turnover of tRNA: specifically removes the terminal AMP residue from uncharged tRNA (tRNA-C-C-A). Also appears to be involved in tRNA biosynthesis. This chain is Ribonuclease T, found in Pseudomonas syringae pv. tomato (strain ATCC BAA-871 / DC3000).